The following is a 249-amino-acid chain: Probable phosphatase VV2_1469 (249 aa).

The Zn(2+) site is built by H8, H10, H16, H41, E74, H102, H132, D194, and H196.

Belongs to the PHP family. The cofactor is Zn(2+).

This chain is Probable phosphatase VV2_1469, found in Vibrio vulnificus (strain CMCP6).